Here is a 481-residue protein sequence, read N- to C-terminus: Ribulose bisphosphate carboxylase large chain (481 aa).

A propeptide spanning residues 1-2 (MS) is cleaved from the precursor. Proline 3 is subject to N-acetylproline. Lysine 14 is modified (N6,N6,N6-trimethyllysine). Positions 123 and 173 each coordinate substrate. The Proton acceptor role is filled by lysine 175. Lysine 177 is a binding site for substrate. Residues lysine 201, aspartate 203, and glutamate 204 each coordinate Mg(2+). Lysine 201 is modified (N6-carboxylysine). Histidine 294 serves as the catalytic Proton acceptor. The substrate site is built by arginine 295, histidine 327, and serine 379.

It belongs to the RuBisCO large chain family. Type I subfamily. Heterohexadecamer of 8 large chains and 8 small chains; disulfide-linked. The disulfide link is formed within the large subunit homodimers. Mg(2+) is required as a cofactor. In terms of processing, the disulfide bond which can form in the large chain dimeric partners within the hexadecamer appears to be associated with oxidative stress and protein turnover.

It localises to the plastid. It catalyses the reaction 2 (2R)-3-phosphoglycerate + 2 H(+) = D-ribulose 1,5-bisphosphate + CO2 + H2O. The enzyme catalyses D-ribulose 1,5-bisphosphate + O2 = 2-phosphoglycolate + (2R)-3-phosphoglycerate + 2 H(+). RuBisCO catalyzes two reactions: the carboxylation of D-ribulose 1,5-bisphosphate, the primary event in carbon dioxide fixation, as well as the oxidative fragmentation of the pentose substrate in the photorespiration process. Both reactions occur simultaneously and in competition at the same active site. The protein is Ribulose bisphosphate carboxylase large chain of Cuscuta obtusiflora (Peruvian dodder).